The primary structure comprises 580 residues: High affinity choline transporter 1 (580 aa).

Over 1–6 the chain is Extracellular; the sequence is MPFHVE. The chain crosses the membrane as a helical span at residues 7–27; the sequence is GLVAIILFYLLIFLVGIWAAW. Residues 28 to 48 lie on the Cytoplasmic side of the membrane; that stretch reads KTKNSGNAEERSEAIIVGGRD. The helical transmembrane segment at 49-69 threads the bilayer; it reads IGLLVGGFTMTATWVGGGYIN. Over 70–81 the chain is Extracellular; it reads GTAEAVYGPGCG. Residues 82-102 form a helical membrane-spanning segment; sequence LAWAQAPIGYSLSLILGGLFF. Residues 103–125 are Cytoplasmic-facing; that stretch reads AKPMRSKGYVTMLDPFQQIYGKR. A helical transmembrane segment spans residues 126–146; sequence MGGLLFIPALMGEMFWAAAIF. Topologically, residues 147-164 are extracellular; the sequence is SALGATISVIIDVDVNIS. A helical transmembrane segment spans residues 165-185; sequence VIVSALIAILYTLVGGLYSVA. The Cytoplasmic segment spans residues 186 to 191; that stretch reads YTDVVQ. A helical membrane pass occupies residues 192-212; the sequence is LFCIFIGLWISVPFALSHPAV. The Extracellular portion of the chain corresponds to 213 to 237; that stretch reads TDIGFTAVHAKYQSPWLGTIESVEV. A helical membrane pass occupies residues 238–258; it reads YTWLDNFLLLMLGGIPWQAYF. Over 259–274 the chain is Cytoplasmic; that stretch reads QRVLSSSSATYAQVLS. The chain crosses the membrane as a helical span at residues 275-295; sequence FLAAFGCLVMALPAICIGAIG. Residues 296–317 lie on the Extracellular side of the membrane; sequence ASTDWNQTAYGFPDPKTKEEAD. N-linked (GlcNAc...) asparagine glycosylation occurs at asparagine 301. Residues 318–338 form a helical membrane-spanning segment; it reads MILPIVLQYLCPVYISFFGLG. Topologically, residues 339–376 are cytoplasmic; that stretch reads AVSAAVMSSADSSILSASSMFARNIYQLSFRQNASDKE. A helical membrane pass occupies residues 377–397; that stretch reads IVWVMRITVFVFGASATAMAL. The Extracellular portion of the chain corresponds to 398–406; sequence LTKTVYGLW. The helical transmembrane segment at 407–427 threads the bilayer; sequence YLSSDLVYIIIFPQLLCVLFI. At 428–435 the chain is on the cytoplasmic side; sequence KGTNTYGA. The helical transmembrane segment at 436-456 threads the bilayer; sequence VAGYIFGLFLRITGGEPYLYL. The Extracellular segment spans residues 457-481; the sequence is QPLIFYPGYYPDKNGIYNQRFPFKT. The helical transmembrane segment at 482–502 threads the bilayer; it reads LSMVTSFFTNICVSYLAKYLF. The mediates interaction with SEC14L1 stretch occupies residues 502 to 580; that stretch reads FESGTLPPKL…EGSGTEDNLQ (79 aa). At 503–580 the chain is on the cytoplasmic side; the sequence is ESGTLPPKLD…EGSGTEDNLQ (78 aa). A Dileucine-like motif motif is present at residues 527-532; it reads DKTILV.

Belongs to the sodium:solute symporter (SSF) (TC 2.A.21) family. Homooligomerizes at cell surface. Interacts with SEC14L1; may regulate SLC5A7. In terms of processing, phosphorylated. In terms of tissue distribution, expressed in basal forebrain, brain stem, spinal chord, and striatum. Specific for cholinergic neurons.

It localises to the presynaptic cell membrane. The protein localises to the cell projection. Its subcellular location is the axon. The protein resides in the early endosome membrane. It is found in the cytoplasmic vesicle. It localises to the secretory vesicle. The protein localises to the synaptic vesicle membrane. It catalyses the reaction choline(out) + n Na(+)(out) = choline(in) + n Na(+)(in). Its activity is regulated as follows. Choline uptake activity is regulated by SLC5A7/CHT1 internalization (inactive form) from the cell surface and recycling of internalized SLC5A7/CHT1 into the cell surface (active form). Activated by extracellular chloride ion. Specifically inhibited by nanomolar concentrations of hemicholinium 3. Functionally, high-affinity Na(+)-coupled choline transmembrane symporter. Functions as an electrogenic, voltage-dependent transporter with variable charge/choline stoichiometry. Choline uptake and choline-induced current is also Cl(-)-dependent where Cl(-) is likely a regulatory ion rather than cotransported ion. Plays a critical role in acetylcholine (ACh) synthesis by taking up the substrate choline from the synaptic cleft into the presynaptic nerve terminals after neurotransmitter release. SLC5A7/CHT1-mediated choline high-affinity transport in cholinergic neurons is the rate-limiting step for production of ACh, thereby facilitating communication by subsequent action potentials. Localized predominantly in presynaptic terminal intracellular organelles, and translocated to the plasma membrane in active form in response to neuronal activity. This is High affinity choline transporter 1 from Rattus norvegicus (Rat).